Here is a 346-residue protein sequence, read N- to C-terminus: Dihydroorotate dehydrogenase (quinone) (346 aa).

FMN contacts are provided by residues 62–66 and T86; that span reads AGMDK. K66 contacts substrate. Position 111 to 115 (111 to 115) interacts with substrate; sequence NRMGF. The FMN site is built by N142 and N175. N175 is a binding site for substrate. S178 functions as the Nucleophile in the catalytic mechanism. Residue N180 coordinates substrate. FMN is bound by residues K211 and V239. 240–241 is a substrate binding site; it reads NT. FMN contacts are provided by residues G261, G289, and 310–311; that span reads YT.

The protein belongs to the dihydroorotate dehydrogenase family. Type 2 subfamily. In terms of assembly, monomer. It depends on FMN as a cofactor.

It localises to the cell membrane. The catalysed reaction is (S)-dihydroorotate + a quinone = orotate + a quinol. It participates in pyrimidine metabolism; UMP biosynthesis via de novo pathway; orotate from (S)-dihydroorotate (quinone route): step 1/1. In terms of biological role, catalyzes the conversion of dihydroorotate to orotate with quinone as electron acceptor. The polypeptide is Dihydroorotate dehydrogenase (quinone) (Thermus thermophilus (strain ATCC BAA-163 / DSM 7039 / HB27)).